Reading from the N-terminus, the 191-residue chain is MKDEHNQEHDHLSQKEPEFCEKACACKEQQNEEMQEASEKECEIKEDFELKYKEMHEKYLRVHADFENVKKRLERDKSMALEYAYEKIALDLLPVIDALLGAYKSAAEVDKESALTKGLELTMEKLHEVLARHGIEGIECLEEFDPNFHNAIMQVKSEEKENGKIVQVLQQGYKYKGRVLRPAMVSIAKND.

The protein belongs to the GrpE family. As to quaternary structure, homodimer.

Its subcellular location is the cytoplasm. Functionally, participates actively in the response to hyperosmotic and heat shock by preventing the aggregation of stress-denatured proteins, in association with DnaK and GrpE. It is the nucleotide exchange factor for DnaK and may function as a thermosensor. Unfolded proteins bind initially to DnaJ; upon interaction with the DnaJ-bound protein, DnaK hydrolyzes its bound ATP, resulting in the formation of a stable complex. GrpE releases ADP from DnaK; ATP binding to DnaK triggers the release of the substrate protein, thus completing the reaction cycle. Several rounds of ATP-dependent interactions between DnaJ, DnaK and GrpE are required for fully efficient folding. In Helicobacter pylori (strain P12), this protein is Protein GrpE.